Reading from the N-terminus, the 414-residue chain is Probable indole-3-pyruvate monooxygenase YUCCA1 (414 aa).

Residue 25-30 participates in FAD binding; it reads GAGPSG. 189–194 is an NADP(+) binding site; sequence GCGNSG.

It belongs to the FMO family. Requires FAD as cofactor. As to expression, expressed in the apical meristems and young floral primordia. Detected in the floral meristems and at the base of the floral organs.

The catalysed reaction is indole-3-pyruvate + NADPH + O2 + H(+) = (indol-3-yl)acetate + CO2 + NADP(+) + H2O. It functions in the pathway plant hormone metabolism; auxin biosynthesis. Involved in auxin biosynthesis, but not in the tryptamine or the CYP79B2/B3 branches. Catalyzes in vitro the N-oxidation of tryptamine to form N-hydroxyl tryptamine. Involved during embryogenesis and seedling development. Required for the formation of floral organs and vascular tissues. Belongs to the set of redundant YUCCA genes probably responsible for auxin biosynthesis in shoots. This chain is Probable indole-3-pyruvate monooxygenase YUCCA1 (YUC1), found in Arabidopsis thaliana (Mouse-ear cress).